A 398-amino-acid chain; its full sequence is Serine/threonine-protein kinase ppk23 (398 aa).

The 286-residue stretch at 74-359 (YEILEKIEEG…AKEALEHPYF (286 aa)) folds into the Protein kinase domain. Residues 80 to 88 (IEEGSYGIV) and lysine 103 contribute to the ATP site. Aspartate 198 acts as the Proton acceptor in catalysis. The segment at 359–398 (FYESPRPKDPKFFPTFPSKAKGESKEKNVFQSFRSASPKK) is disordered. Over residues 387–398 (VFQSFRSASPKK) the composition is skewed to polar residues.

Belongs to the protein kinase superfamily. Ser/Thr protein kinase family.

It localises to the nucleus. The catalysed reaction is L-seryl-[protein] + ATP = O-phospho-L-seryl-[protein] + ADP + H(+). The enzyme catalyses L-threonyl-[protein] + ATP = O-phospho-L-threonyl-[protein] + ADP + H(+). This Schizosaccharomyces pombe (strain 972 / ATCC 24843) (Fission yeast) protein is Serine/threonine-protein kinase ppk23 (ppk23).